Reading from the N-terminus, the 148-residue chain is MELILLEKIANLGNLGDKVNVKAGYGRNYLLPFGKATAATAANLAAFEARRAELEKLAAEKKASAETRAAQLAELEVTITATAGDEGKLFGSIGTHDIADALTASGVEVAKSEVRLPNGTIRNVGEFDVAVHLHAEVEATVRVVVVAA.

It belongs to the bacterial ribosomal protein bL9 family.

Its function is as follows. Binds to the 23S rRNA. The protein is Large ribosomal subunit protein bL9 of Pseudomonas fluorescens (strain ATCC BAA-477 / NRRL B-23932 / Pf-5).